A 171-amino-acid chain; its full sequence is Methylated-DNA--protein-cysteine methyltransferase (171 aa).

C139 functions as the Nucleophile; methyl group acceptor in the catalytic mechanism.

It belongs to the MGMT family.

The protein resides in the cytoplasm. The enzyme catalyses a 6-O-methyl-2'-deoxyguanosine in DNA + L-cysteinyl-[protein] = S-methyl-L-cysteinyl-[protein] + a 2'-deoxyguanosine in DNA. It carries out the reaction a 4-O-methyl-thymidine in DNA + L-cysteinyl-[protein] = a thymidine in DNA + S-methyl-L-cysteinyl-[protein]. Its function is as follows. Involved in the cellular defense against the biological effects of O6-methylguanine (O6-MeG) and O4-methylthymine (O4-MeT) in DNA. Repairs the methylated nucleobase in DNA by stoichiometrically transferring the methyl group to a cysteine residue in the enzyme. This is a suicide reaction: the enzyme is irreversibly inactivated. In Shigella flexneri, this protein is Methylated-DNA--protein-cysteine methyltransferase.